The following is a 359-amino-acid chain: DNA ligase (359 aa).

Residues 32–35, arginine 39, 55–57, and glutamate 93 contribute to the ATP site; these read EIKY and RVS. Residue lysine 34 is the N6-AMP-lysine intermediate of the active site. Glutamate 217 is a binding site for a divalent metal cation. Residues lysine 232 and lysine 238 each coordinate ATP.

Belongs to the ATP-dependent DNA ligase family. Requires a divalent metal cation as cofactor.

The enzyme catalyses ATP + (deoxyribonucleotide)n-3'-hydroxyl + 5'-phospho-(deoxyribonucleotide)m = (deoxyribonucleotide)n+m + AMP + diphosphate.. In terms of biological role, DNA ligase that seals nicks in double-stranded DNA during DNA replication, DNA recombination and DNA repair in an ATP-dependent reaction. Binds specifically to DNA nicks containing a 3'-OH and a 5'-phosphate group. The protein is DNA ligase of Escherichia phage T7 (Bacteriophage T7).